Consider the following 356-residue polypeptide: UDP-N-acetylglucosamine--N-acetylmuramyl-(pentapeptide) pyrophosphoryl-undecaprenol N-acetylglucosamine transferase (356 aa).

UDP-N-acetyl-alpha-D-glucosamine-binding positions include 15–17 (TGG), Asn-127, Arg-163, Ser-191, Ile-244, 263–268 (ALTVSE), and Gln-288.

Belongs to the glycosyltransferase 28 family. MurG subfamily.

Its subcellular location is the cell inner membrane. The catalysed reaction is di-trans,octa-cis-undecaprenyl diphospho-N-acetyl-alpha-D-muramoyl-L-alanyl-D-glutamyl-meso-2,6-diaminopimeloyl-D-alanyl-D-alanine + UDP-N-acetyl-alpha-D-glucosamine = di-trans,octa-cis-undecaprenyl diphospho-[N-acetyl-alpha-D-glucosaminyl-(1-&gt;4)]-N-acetyl-alpha-D-muramoyl-L-alanyl-D-glutamyl-meso-2,6-diaminopimeloyl-D-alanyl-D-alanine + UDP + H(+). Its pathway is cell wall biogenesis; peptidoglycan biosynthesis. Functionally, cell wall formation. Catalyzes the transfer of a GlcNAc subunit on undecaprenyl-pyrophosphoryl-MurNAc-pentapeptide (lipid intermediate I) to form undecaprenyl-pyrophosphoryl-MurNAc-(pentapeptide)GlcNAc (lipid intermediate II). In Klebsiella pneumoniae (strain 342), this protein is UDP-N-acetylglucosamine--N-acetylmuramyl-(pentapeptide) pyrophosphoryl-undecaprenol N-acetylglucosamine transferase.